We begin with the raw amino-acid sequence, 386 residues long: Phosphoglycerate kinase (386 aa).

Substrate is bound by residues 21-23 (DLN), R36, 59-62 (HLGR), R112, and R145. ATP is bound by residues K196, E313, and 339-342 (GGDT).

It belongs to the phosphoglycerate kinase family. Monomer.

It localises to the cytoplasm. The enzyme catalyses (2R)-3-phosphoglycerate + ATP = (2R)-3-phospho-glyceroyl phosphate + ADP. The protein operates within carbohydrate degradation; glycolysis; pyruvate from D-glyceraldehyde 3-phosphate: step 2/5. This is Phosphoglycerate kinase from Haemophilus influenzae (strain 86-028NP).